The sequence spans 162 residues: Ecotin (162 aa).

Positions 1-18 (MKMFVPAVVFAASASAWA) are cleaved as a signal peptide. Cys-70 and Cys-107 are oxidised to a cystine.

It belongs to the protease inhibitor I11 (ecotin) family. In terms of assembly, homodimer.

Its subcellular location is the periplasm. General inhibitor of pancreatic serine proteases: inhibits chymotrypsin, trypsin, elastases, factor X, kallikrein as well as a variety of other proteases. In Salmonella arizonae (strain ATCC BAA-731 / CDC346-86 / RSK2980), this protein is Ecotin.